The chain runs to 715 residues: ATP-dependent RecD2 DNA helicase (715 aa).

The tract at residues Met1–Trp150 is not required for helicase activity. ATP is bound by residues Gln343 and Gly363 to Ser367. DNA-binding regions lie at residues Gly391 and Thr407–Tyr414. An ATP-binding site is contributed by Gln466. Val470 is a DNA-binding region. Residue Arg493 participates in ATP binding. 3 consecutive DNA-binding regions follow at residues Arg554 to Lys555, Asn596 to Asn604, and Thr644 to Arg647. Arg679 is a binding site for ATP.

The protein belongs to the RecD family. RecD2 subfamily. In terms of assembly, monomer; homodimers seem to be inactive.

The enzyme catalyses Couples ATP hydrolysis with the unwinding of duplex DNA at the replication fork by translocating in the 5'-3' direction. This creates two antiparallel DNA single strands (ssDNA). The leading ssDNA polymer is the template for DNA polymerase III holoenzyme which synthesizes a continuous strand.. It carries out the reaction ATP + H2O = ADP + phosphate + H(+). In terms of biological role, DNA-dependent ATPase (ssDNA stimulates the ATPase better than dsDNA) and ATP-dependent 5'-3' DNA helicase. Plays a role in an antioxidant pathway. Involved in DNA damage repair and/or recombination. Appears to move along DNA in single base steps, powered by hydrolysis of 1 molecule of ATP. Has low processivity, unwinds about 15-20 base pairs/second. Short (20 bp) substrates with 5'-overhangs or forked ends are the best substrates, is much less efficient on 52 or 76 bp substrates with 5'-overhangs. The presence of single-stranded DNA-binding protein (SSB) increases unwinding 4-5 fold. Has no activity on blunt DNA or DNA with 3'-overhangs. Requires at least 10 bases of 5'-ssDNA for helicase activity. The protein is ATP-dependent RecD2 DNA helicase of Deinococcus radiodurans (strain ATCC 13939 / DSM 20539 / JCM 16871 / CCUG 27074 / LMG 4051 / NBRC 15346 / NCIMB 9279 / VKM B-1422 / R1).